A 262-amino-acid chain; its full sequence is 2-oxo-tetronate isomerase (262 aa).

The active-site Proton donor/acceptor is E143. Residues E143, D178, Q204, and E240 each coordinate Mg(2+). Catalysis depends on E240, which acts as the Proton donor/acceptor.

It belongs to the hyi family. OtnI subfamily.

The catalysed reaction is 2-dehydro-L-erythronate = 3-dehydro-L-erythronate. It carries out the reaction 2-dehydro-D-erythronate = 3-dehydro-D-erythronate. Catalyzes the isomerization of 2-oxo-tetronate to 3-oxo-tetronate. The chain is 2-oxo-tetronate isomerase from Pectobacterium atrosepticum (strain SCRI 1043 / ATCC BAA-672) (Erwinia carotovora subsp. atroseptica).